Consider the following 162-residue polypeptide: Lipoprotein signal peptidase (162 aa).

The next 4 membrane-spanning stretches (helical) occupy residues 12–32 (WFAL…YFNS), 42–62 (VVEG…FSFL), 66–86 (GGWQ…WLGW), and 93–113 (FSGL…GNVI). Active-site residues include Asp-123 and Asp-142. A helical membrane pass occupies residues 133-153 (WYYPAFNLADSFICVGAALMV).

This sequence belongs to the peptidase A8 family.

The protein localises to the cell inner membrane. It catalyses the reaction Release of signal peptides from bacterial membrane prolipoproteins. Hydrolyzes -Xaa-Yaa-Zaa-|-(S,diacylglyceryl)Cys-, in which Xaa is hydrophobic (preferably Leu), and Yaa (Ala or Ser) and Zaa (Gly or Ala) have small, neutral side chains.. It participates in protein modification; lipoprotein biosynthesis (signal peptide cleavage). In terms of biological role, this protein specifically catalyzes the removal of signal peptides from prolipoproteins. This Chromobacterium violaceum (strain ATCC 12472 / DSM 30191 / JCM 1249 / CCUG 213 / NBRC 12614 / NCIMB 9131 / NCTC 9757 / MK) protein is Lipoprotein signal peptidase.